The chain runs to 226 residues: ATP synthase F(0) complex subunit a (226 aa).

6 consecutive transmembrane segments (helical) span residues 11 to 31, 68 to 88, 97 to 117, 138 to 158, 164 to 184, and 189 to 209; these read APSM…SILF, WALM…LGLL, QLSM…ITGF, IPML…ALAV, ITAG…LINI, and AFIT…VALI.

It belongs to the ATPase A chain family. In terms of assembly, component of the ATP synthase complex composed at least of ATP5F1A/subunit alpha, ATP5F1B/subunit beta, ATP5MC1/subunit c (homooctomer), MT-ATP6/subunit a, MT-ATP8/subunit 8, ATP5ME/subunit e, ATP5MF/subunit f, ATP5MG/subunit g, ATP5MK/subunit k, ATP5MJ/subunit j, ATP5F1C/subunit gamma, ATP5F1D/subunit delta, ATP5F1E/subunit epsilon, ATP5PF/subunit F6, ATP5PB/subunit b, ATP5PD/subunit d, ATP5PO/subunit OSCP. ATP synthase complex consists of a soluble F(1) head domain (subunits alpha(3) and beta(3)) - the catalytic core - and a membrane F(0) domain - the membrane proton channel (subunits c, a, 8, e, f, g, k and j). These two domains are linked by a central stalk (subunits gamma, delta, and epsilon) rotating inside the F1 region and a stationary peripheral stalk (subunits F6, b, d, and OSCP). Interacts with DNAJC30; interaction is direct.

It is found in the mitochondrion inner membrane. It carries out the reaction H(+)(in) = H(+)(out). Functionally, subunit a, of the mitochondrial membrane ATP synthase complex (F(1)F(0) ATP synthase or Complex V) that produces ATP from ADP in the presence of a proton gradient across the membrane which is generated by electron transport complexes of the respiratory chain. ATP synthase complex consist of a soluble F(1) head domain - the catalytic core - and a membrane F(1) domain - the membrane proton channel. These two domains are linked by a central stalk rotating inside the F(1) region and a stationary peripheral stalk. During catalysis, ATP synthesis in the catalytic domain of F(1) is coupled via a rotary mechanism of the central stalk subunits to proton translocation. With the subunit c (ATP5MC1), forms the proton-conducting channel in the F(0) domain, that contains two crucial half-channels (inlet and outlet) that facilitate proton movement from the mitochondrial intermembrane space (IMS) into the matrix. Protons are taken up via the inlet half-channel and released through the outlet half-channel, following a Grotthuss mechanism. This chain is ATP synthase F(0) complex subunit a, found in Canis lupus familiaris (Dog).